The following is a 1500-amino-acid chain: Copper-transporting ATPase 1 (1500 aa).

Residues 1-653 (MDPSMGVNSV…KREIRQWRRS (653 aa)) lie on the Cytoplasmic side of the membrane. 2 HMA domains span residues 8–74 (NSVT…FDAV) and 85–151 (TDTL…LDTG). Cu(+)-binding residues include Thr18, Cys19, and Cys22. Thr152 bears the Phosphothreonine mark. Residues 171–237 (VVLKMKVEGM…QIEAMGFPAF (67 aa)) enclose the HMA 3 domain. Cu(+) is bound by residues Cys182 and Cys185. At Ser270 the chain carries Phosphoserine. An HMA 4 domain is found at 277-343 (STATFIIDGM…AIEAVSPGLY (67 aa)). 2 residues coordinate Cu(+): Cys288 and Cys291. At Thr327 the chain carries Phosphothreonine. Phosphoserine occurs at positions 339, 353, 357, and 362. HMA domains are found at residues 377–443 (QETV…FDAT), 488–554 (SKCY…FGAT), and 564–630 (GVLE…FEAS). The Cu(+) site is built by Cys388, Cys391, Cys499, Cys502, Cys575, and Cys578. Residues 654–675 (FLVSLFFCIPVMGLMIYMMVMD) form a helical membrane-spanning segment. Residues 676 to 714 (HHFATLHHNQNMSKEEMINLHSSMFLERQILPGLSVMNL) lie on the Extracellular side of the membrane. N-linked (GlcNAc...) asparagine glycosylation occurs at Asn686. Residues 715-734 (LSFLLCVPVQFFGGWYFYIQ) traverse the membrane as a helical segment. Residues 735 to 741 (AYKALKH) are Cytoplasmic-facing. Residues 742–762 (KTANMDVLIVLATTIAFAYSL) form a helical membrane-spanning segment. Over 763-781 (IILLVAMYERAKVNPITFF) the chain is Extracellular. The chain crosses the membrane as a helical span at residues 782–802 (DTPPMLFVFIALGRWLEHIAK). The Cytoplasmic segment spans residues 803 to 936 (GKTSEALAKL…KAPIQQFADK (134 aa)). The chain crosses the membrane as a helical span at residues 937 to 959 (LSGYFVPFIVFVSIATLLVWIVI). Over 960-989 (GFLNFEIVETYFPGYNRSISRTETIIRFAF) the chain is Extracellular. The N-linked (GlcNAc...) asparagine glycan is linked to Asn975. The chain crosses the membrane as a helical span at residues 990-1011 (QASITVLCIACPCSLGLATPTA). The Cytoplasmic segment spans residues 1012 to 1356 (VMVGTGVGAQ…LSRKTVKRIR (345 aa)). The active-site 4-aspartylphosphate intermediate is Asp1044. Glu1081 serves as a coordination point for ATP. Phosphothreonine is present on Thr1212. Residues Asp1301 and Asp1305 each contribute to the Mg(2+) site. The chain crosses the membrane as a helical span at residues 1357 to 1374 (INFVFALIYNLVGIPIAA). At 1375-1385 (GVFMPIGLVLQ) the chain is on the extracellular side. Residues 1386–1405 (PWMGSAAMAASSVSVVLSSL) traverse the membrane as a helical segment. Residues 1406 to 1500 (FLKLYRKPTY…DFREDDDTAL (95 aa)) lie on the Cytoplasmic side of the membrane. Ser1430, Ser1432, Ser1460, Ser1463, and Ser1466 each carry phosphoserine. The Endocytosis signal signature appears at 1467 to 1468 (LL). Ser1469, Ser1473, Ser1476, and Ser1486 each carry phosphoserine. The segment at 1486–1500 (SLLVGDFREDDDTAL) is PDZD11-binding. An Endocytosis signal motif is present at residues 1487-1488 (LL).

Belongs to the cation transport ATPase (P-type) (TC 3.A.3) family. Type IB subfamily. In terms of assembly, monomer. Interacts with PDZD11. Interacts with ATOX1 and COMMD1. Interacts with TYRP1. Directly interacts with SOD3; this interaction is copper-dependent and is required for SOD3 activity. In terms of tissue distribution, widely expressed including in heart, brain, lung, muscle, kidney, pancreas, and to a lesser extent placenta. Expressed in fibroblasts, aortic smooth muscle cells, aortic endothelial cells and umbilical vein endothelial cells (at protein level). Expressed in cerebellum and brain cortex.

The protein resides in the golgi apparatus. The protein localises to the trans-Golgi network membrane. It localises to the cell membrane. Its subcellular location is the melanosome membrane. It is found in the early endosome membrane. The protein resides in the cell projection. The protein localises to the axon. It localises to the dendrite. Its subcellular location is the postsynaptic density. It is found in the cytoplasm. The protein resides in the cytosol. The protein localises to the endoplasmic reticulum. The enzyme catalyses Cu(+)(in) + ATP + H2O = Cu(+)(out) + ADP + phosphate + H(+). Functionally, ATP-driven copper (Cu(+)) ion pump that plays an important role in intracellular copper ion homeostasis. Within a catalytic cycle, acquires Cu(+) ion from donor protein on the cytoplasmic side of the membrane and delivers it to acceptor protein on the lumenal side. The transfer of Cu(+) ion across the membrane is coupled to ATP hydrolysis and is associated with a transient phosphorylation that shifts the pump conformation from inward-facing to outward-facing state. Under physiological conditions, at low cytosolic copper concentration, it is localized at the trans-Golgi network (TGN) where it transfers Cu(+) ions to cuproenzymes of the secretory pathway. Upon elevated cytosolic copper concentrations, it relocalizes to the plasma membrane where it is responsible for the export of excess Cu(+) ions. May play a dual role in neuron function and survival by regulating cooper efflux and neuronal transmission at the synapse as well as by supplying Cu(+) ions to enzymes such as PAM, TYR and SOD3. In the melanosomes of pigmented cells, provides copper cofactor to TYR to form an active TYR holoenzyme for melanin biosynthesis. The sequence is that of Copper-transporting ATPase 1 from Homo sapiens (Human).